The following is a 239-amino-acid chain: SH3 domain-binding glutamic acid-rich protein (239 aa).

An SH3-binding motif is present at residues 124–130 (NGIPLPP). The tract at residues 159 to 239 (GLAPPPDSKG…GEEPGEDEDS (81 aa)) is disordered. Residues 167–185 (KGSEKAEEGGETEAQKEGS) are compositionally biased toward basic and acidic residues. A compositionally biased stretch (acidic residues) spans 198 to 239 (NEEEGETATEETEEIAMEGAEGEAEEEEETAEGEEPGEDEDS).

Belongs to the SH3BGR family. As to expression, expressed in heart and skeletal muscle.

This is SH3 domain-binding glutamic acid-rich protein (SH3BGR) from Homo sapiens (Human).